Here is a 451-residue protein sequence, read N- to C-terminus: UPF0210 protein NMC1568 (451 aa).

This sequence belongs to the UPF0210 family. Homodimer.

This is UPF0210 protein NMC1568 from Neisseria meningitidis serogroup C / serotype 2a (strain ATCC 700532 / DSM 15464 / FAM18).